The sequence spans 1465 residues: DNA polymerase III PolC-type (1465 aa).

The 157-residue stretch at 425-581 (YVVFDVETTG…YDAEATGRLL (157 aa)) folds into the Exonuclease domain.

This sequence belongs to the DNA polymerase type-C family. PolC subfamily.

The protein localises to the cytoplasm. The enzyme catalyses DNA(n) + a 2'-deoxyribonucleoside 5'-triphosphate = DNA(n+1) + diphosphate. Its function is as follows. Required for replicative DNA synthesis. This DNA polymerase also exhibits 3' to 5' exonuclease activity. The polypeptide is DNA polymerase III PolC-type (Streptococcus mutans serotype c (strain ATCC 700610 / UA159)).